The chain runs to 295 residues: ATP synthase gamma chain (295 aa).

This sequence belongs to the ATPase gamma chain family. As to quaternary structure, F-type ATPases have 2 components, CF(1) - the catalytic core - and CF(0) - the membrane proton channel. CF(1) has five subunits: alpha(3), beta(3), gamma(1), delta(1), epsilon(1). CF(0) has three main subunits: a, b and c.

It is found in the cell inner membrane. Its function is as follows. Produces ATP from ADP in the presence of a proton gradient across the membrane. The gamma chain is believed to be important in regulating ATPase activity and the flow of protons through the CF(0) complex. This chain is ATP synthase gamma chain, found in Campylobacter curvus (strain 525.92).